The sequence spans 151 residues: uncharacterized protein (151 aa).

The segment at 1–77 (MSLLGGMWKS…LGSNPISSSR (77 aa)) is disordered. Composition is skewed to low complexity over residues 19 to 54 (PKPS…RSSN) and 63 to 76 (SISG…ISSS).

This is an uncharacterized protein from Methanothermobacter marburgensis (strain ATCC BAA-927 / DSM 2133 / JCM 14651 / NBRC 100331 / OCM 82 / Marburg) (Methanobacterium thermoautotrophicum).